A 437-amino-acid polypeptide reads, in one-letter code: Arginine biosynthesis bifunctional protein ArgJ, mitochondrial (437 aa).

The substrate site is built by Thr-173, Lys-200, Thr-211, Glu-297, Asn-432, and Ser-437. Thr-211 serves as the catalytic Nucleophile.

This sequence belongs to the ArgJ family. In terms of assembly, heterodimer of an alpha and a beta chain. Post-translationally, the alpha and beta chains are autoproteolytically processed from a single precursor protein within the mitochondrion.

Its subcellular location is the mitochondrion matrix. The catalysed reaction is N(2)-acetyl-L-ornithine + L-glutamate = N-acetyl-L-glutamate + L-ornithine. It carries out the reaction L-glutamate + acetyl-CoA = N-acetyl-L-glutamate + CoA + H(+). Its pathway is amino-acid biosynthesis; L-arginine biosynthesis; L-ornithine and N-acetyl-L-glutamate from L-glutamate and N(2)-acetyl-L-ornithine (cyclic): step 1/1. The protein operates within amino-acid biosynthesis; L-arginine biosynthesis; N(2)-acetyl-L-ornithine from L-glutamate: step 1/4. Functionally, catalyzes two activities which are involved in the cyclic version of arginine biosynthesis: the synthesis of acetylglutamate from glutamate and acetyl-CoA, and of ornithine by transacetylation between acetylornithine and glutamate. The polypeptide is Arginine biosynthesis bifunctional protein ArgJ, mitochondrial (Zygosaccharomyces rouxii (strain ATCC 2623 / CBS 732 / NBRC 1130 / NCYC 568 / NRRL Y-229)).